Reading from the N-terminus, the 311-residue chain is L-lactate dehydrogenase 2 (311 aa).

The NAD(+) site is built by V14, D35, and R40. Residues R90 and 122–125 (NPCD) contribute to the substrate site. NAD(+)-binding positions include 120-122 (ATN) and T145. 150–153 (DTTR) is a substrate binding site. The Proton acceptor role is filled by H177. Residue T230 participates in substrate binding.

This sequence belongs to the LDH/MDH superfamily. LDH family. Homotetramer.

Its subcellular location is the cytoplasm. It catalyses the reaction (S)-lactate + NAD(+) = pyruvate + NADH + H(+). It participates in fermentation; pyruvate fermentation to lactate; (S)-lactate from pyruvate: step 1/1. Functionally, catalyzes the conversion of lactate to pyruvate. The protein is L-lactate dehydrogenase 2 of Listeria monocytogenes serovar 1/2a (strain ATCC BAA-679 / EGD-e).